Here is a 214-residue protein sequence, read N- to C-terminus: UBX domain-containing protein 10 (214 aa).

The segment covering 1-13 has biased composition (basic residues); that stretch reads MHVTRPKSSKGRS. Residues 1 to 79 are disordered; that stretch reads MHVTRPKSSK…AYDRPPEEPV (79 aa). Residues 16–25 are compositionally biased toward polar residues; sequence MITNSSMIYT. The segment covering 49–60 has biased composition (low complexity); sequence SLRSRAILRRSS. The UBX domain maps to 127–204; the sequence is PEESDLLLAI…GVLNKSVLCI (78 aa).

It belongs to the UBXN10 family.

The protein localises to the cell projection. The protein resides in the cilium. Required for ciliogenesis. Acts as a tethering factor that facilitates recruitment of vcp/p97 to the intraflagellar transport complex B (IFT-B) in cilia. The sequence is that of UBX domain-containing protein 10 from Danio rerio (Zebrafish).